The primary structure comprises 251 residues: Mediator of RNA polymerase II transcription subunit 7 (251 aa).

Positions 1-38 (MLPGFGAQTVSPFPNPPEYASAYTSDRINNGSAPPPPH) are disordered. A compositionally biased stretch (polar residues) spans 22–32 (AYTSDRINNGS).

It belongs to the Mediator complex subunit 7 family. Component of the Mediator complex. Interacts with mdt-10 and mdt-21. Interacts with RNA polymerase II.

It is found in the nucleus. Functionally, component of the Mediator complex, a coactivator involved in the regulated transcription of nearly all RNA polymerase II-dependent genes. Mediator functions as a bridge to convey information from gene-specific regulatory proteins to the basal RNA polymerase II transcription machinery. Mediator is recruited to promoters by direct interactions with regulatory proteins and serves as a scaffold for the assembly of a functional preinitiation complex with RNA polymerase II and the general transcription factors. Required for germ cell development and gonadal growth. This Caenorhabditis elegans protein is Mediator of RNA polymerase II transcription subunit 7 (let-49).